Here is a 595-residue protein sequence, read N- to C-terminus: Apolipoprotein N-acyltransferase 2 (595 aa).

Transmembrane regions (helical) follow at residues 30-50, 63-83, 95-115, 167-187, and 210-230; these read FLAF…FGFF, LFFH…HWII, VVAI…FPIF, AEIT…YTLF, and FITL…FLFK. The CN hydrolase domain occupies 241-555; the sequence is LNVLIVQPDA…AEALSETIDV (315 aa). Residue Glu293 is the Proton acceptor of the active site. The active site involves Lys372. The active-site Nucleophile is Cys463. The helical transmembrane segment at 569–589 threads the bilayer; it reads LIPWLMLFLTGIYYLNLLIGI.

This sequence belongs to the CN hydrolase family. Apolipoprotein N-acyltransferase subfamily.

Its subcellular location is the cell inner membrane. It catalyses the reaction N-terminal S-1,2-diacyl-sn-glyceryl-L-cysteinyl-[lipoprotein] + a glycerophospholipid = N-acyl-S-1,2-diacyl-sn-glyceryl-L-cysteinyl-[lipoprotein] + a 2-acyl-sn-glycero-3-phospholipid + H(+). The protein operates within protein modification; lipoprotein biosynthesis (N-acyl transfer). In terms of biological role, catalyzes the phospholipid dependent N-acylation of the N-terminal cysteine of apolipoprotein, the last step in lipoprotein maturation. The polypeptide is Apolipoprotein N-acyltransferase 2 (Leptospira interrogans serogroup Icterohaemorrhagiae serovar copenhageni (strain Fiocruz L1-130)).